A 458-amino-acid polypeptide reads, in one-letter code: Vacuolar basic amino acid transporter 3 (458 aa).

The Cytoplasmic portion of the chain corresponds to 1 to 9 (MNMLIVGRV). The helical transmembrane segment at 10 to 30 (VASVGGSGLQTLCFVIGCTMV) threads the bilayer. The Vacuolar portion of the chain corresponds to 31-36 (GERSRP). The helical transmembrane segment at 37–57 (LVISILSCAFAVAAIVGPIIG) threads the bilayer. At 58 to 67 (GAFTTHVTWR) the chain is on the cytoplasmic side. Residues 68–88 (WCFYINLPIGGLAIIMFLLTY) form a helical membrane-spanning segment. Topologically, residues 89-132 (KAENKGILQQIKDAIGTISSFTFSKFRHQVNFKRLMNGIIFKFD) are vacuolar. A helical membrane pass occupies residues 133 to 153 (FFGFALCSAGLVLFLLGLTFG). The Cytoplasmic segment spans residues 154–163 (GNKYSWNSGQ). A helical transmembrane segment spans residues 164–184 (VIAYLVLGVLLFIFSLVYDFF). At 185–205 (LFDKFNPEPDNISYRPLLLRR) the chain is on the vacuolar side. Residue N195 is glycosylated (N-linked (GlcNAc...) asparagine). The helical transmembrane segment at 206–226 (LVAKPAIIIINMVTFLLCTGY) threads the bilayer. Residues 227–248 (NGQMIYSVQFFQLIFASSAWKA) lie on the Cytoplasmic side of the membrane. Residues 249 to 269 (GLHLIPIVITNVIAAIASGVI) form a helical membrane-spanning segment. Over 270 to 277 (TKKLGLVK) the chain is Vacuolar. The chain crosses the membrane as a helical span at residues 278–298 (PLLIFGGVLGVIGAGLMTLMT). At 299–306 (NTSTKSTQ) the chain is on the cytoplasmic side. A helical membrane pass occupies residues 307–327 (IGVLLLPGFSLGFALQASLMS). At 328-415 (AQLQITKDRP…STIGNILSDS (88 aa)) the chain is on the vacuolar side. A helical membrane pass occupies residues 416–436 (IKNVFWMDLGFYALGFLFCSF). Topologically, residues 437–458 (SSNKKLIIPKKDETPEDNLEDK) are cytoplasmic.

It belongs to the major facilitator superfamily.

It is found in the vacuole membrane. In terms of biological role, transporter required for vacuolar uptake of histidine and lysine. This chain is Vacuolar basic amino acid transporter 3 (VBA3), found in Saccharomyces cerevisiae (strain ATCC 204508 / S288c) (Baker's yeast).